A 250-amino-acid chain; its full sequence is MPRYKLVVEYDGSGFAGWQRQAADRTVQQALEEAIARFAGAPVRVHCAGRTDAGVHATHQVVHLDLDRDWRTDTVRDASNAHLRPEPVAVVSAERVRPDFDARHSALRRHYRYRILNRRSPPALGRAYLWHVPWSLDAHAMHAAAQTLLGRHDFSAFRAAECQANSPVRTLDQLDVARIGDEILVATSARSFLHHQVRGMVGTLMLAGCGRLDAAGVRAVLDSRDRTRCGPLAPAAGLTLTGVDYPEPGP.

D52 serves as the catalytic Nucleophile. A substrate-binding site is contributed by Y111.

This sequence belongs to the tRNA pseudouridine synthase TruA family. In terms of assembly, homodimer.

It catalyses the reaction uridine(38/39/40) in tRNA = pseudouridine(38/39/40) in tRNA. In terms of biological role, formation of pseudouridine at positions 38, 39 and 40 in the anticodon stem and loop of transfer RNAs. This chain is tRNA pseudouridine synthase A, found in Methylobacterium sp. (strain 4-46).